The chain runs to 428 residues: Trigger factor (428 aa).

The PPIase FKBP-type domain maps to 163-248; that stretch reads GDIVDIDFEG…VNDVKVKELP (86 aa).

It belongs to the FKBP-type PPIase family. Tig subfamily.

The protein resides in the cytoplasm. The enzyme catalyses [protein]-peptidylproline (omega=180) = [protein]-peptidylproline (omega=0). In terms of biological role, involved in protein export. Acts as a chaperone by maintaining the newly synthesized protein in an open conformation. Functions as a peptidyl-prolyl cis-trans isomerase. This chain is Trigger factor, found in Acetivibrio thermocellus (strain ATCC 27405 / DSM 1237 / JCM 9322 / NBRC 103400 / NCIMB 10682 / NRRL B-4536 / VPI 7372) (Clostridium thermocellum).